The sequence spans 442 residues: MTGFGGVKNVVVVGLGMTGLSVVKHLLRQPEALIVKVIDTRETPPGQEQLPEQVELHSGSWQQDWLLDADLIVTNPGIALASSQLQPAIKKGTPVVGDIELFAWAVTAPVIAITGSNGKSTVTDLTGEMANAAGVKTAVGGNIGFAALDLLEQDADLYVLELSSFQLETTSSLKLKAAAFLNLSEDHMDRYQGMEDYRQAKLRVFDHADVCIVNRDDKETYPDTADKTLISFGFDTSDEYGCIEENGRLFLAKNNTPIIAANELGLVGKHNIANSLVALALLDAAGVNTNKTLDTLKRYNGLTHRCQVVAEMNGVRWVNDSKATNVASTLAALSGLSIEGKLHLLVGGVGKGADFSELSPALNELDLMMYCFGEDGVQFMPLDPRSRLCQTMDEAIELLSPELTFGDMVMLSPACASFDQYTNFMARGDAFTALAKHYSTEK.

115 to 121 (GSNGKST) serves as a coordination point for ATP.

The protein belongs to the MurCDEF family.

Its subcellular location is the cytoplasm. It catalyses the reaction UDP-N-acetyl-alpha-D-muramoyl-L-alanine + D-glutamate + ATP = UDP-N-acetyl-alpha-D-muramoyl-L-alanyl-D-glutamate + ADP + phosphate + H(+). The protein operates within cell wall biogenesis; peptidoglycan biosynthesis. In terms of biological role, cell wall formation. Catalyzes the addition of glutamate to the nucleotide precursor UDP-N-acetylmuramoyl-L-alanine (UMA). The sequence is that of UDP-N-acetylmuramoylalanine--D-glutamate ligase from Aliivibrio salmonicida (strain LFI1238) (Vibrio salmonicida (strain LFI1238)).